A 283-amino-acid chain; its full sequence is Pantothenate synthetase (283 aa).

An ATP-binding site is contributed by 30 to 37; it reads MGNLHAGH. Histidine 37 serves as the catalytic Proton donor. Glutamine 61 contributes to the (R)-pantoate binding site. A beta-alanine-binding site is contributed by glutamine 61. 149-152 provides a ligand contact to ATP; sequence GEKD. Position 155 (glutamine 155) interacts with (R)-pantoate. ATP-binding positions include valine 178 and 186–189; that span reads LSSR.

Belongs to the pantothenate synthetase family. As to quaternary structure, homodimer.

It is found in the cytoplasm. It carries out the reaction (R)-pantoate + beta-alanine + ATP = (R)-pantothenate + AMP + diphosphate + H(+). It functions in the pathway cofactor biosynthesis; (R)-pantothenate biosynthesis; (R)-pantothenate from (R)-pantoate and beta-alanine: step 1/1. In terms of biological role, catalyzes the condensation of pantoate with beta-alanine in an ATP-dependent reaction via a pantoyl-adenylate intermediate. In Pseudomonas paraeruginosa (strain DSM 24068 / PA7) (Pseudomonas aeruginosa (strain PA7)), this protein is Pantothenate synthetase.